Here is a 256-residue protein sequence, read N- to C-terminus: MIEAARKAARGLARDFGEVTELQVSKKGAADFVTNADIKAEQTLFELLTKARPGYGFLGEERGMVEGTDKTHTWIVDPLDGTTNFMHAIPHFAVNIALQREGEGIVAGVTYNPITNDLFWVEKGKGAFLGAEKRLRVAARRHLDEAILATGVPFAGKPGHGQFLKELHQVSQKVAGVRRFGAASLDLAWVAAGRFDAFWERNLNSWDVAAGVLMIQESGGKITTIDESDHDVVQGKSILASNQDLHPQILERLRAA.

Glutamate 60, aspartate 77, leucine 79, and aspartate 80 together coordinate Mg(2+). Glutamate 60 contacts substrate. Substrate-binding positions include leucine 79–threonine 82, arginine 178, and aspartate 207. Residue aspartate 207 participates in Mg(2+) binding.

This sequence belongs to the inositol monophosphatase superfamily. It depends on Mg(2+) as a cofactor.

It catalyses the reaction a myo-inositol phosphate + H2O = myo-inositol + phosphate. The chain is Inositol-1-monophosphatase (suhB) from Caulobacter vibrioides (strain ATCC 19089 / CIP 103742 / CB 15) (Caulobacter crescentus).